Consider the following 146-residue polypeptide: Mitochondrial DnaJ homolog 2 (146 aa).

One can recognise a J domain in the interval 85–146 (EALLILDISA…LERSVLLRKR (62 aa)).

As to quaternary structure, interacts with PAM16/TIM16 and is recruited by the PAM complex.

The protein resides in the mitochondrion inner membrane. Functionally, plays a role in mitochondrial biogenesis and protein folding. Participates in the translocation of transit peptide-containing proteins from the inner membrane into the mitochondrial matrix in an ATP-dependent manner, probably by stimulating activity of mtHSP70 (SSC1). The chain is Mitochondrial DnaJ homolog 2 (MDJ2) from Saccharomyces cerevisiae (strain ATCC 204508 / S288c) (Baker's yeast).